The sequence spans 218 residues: Small ribosomal subunit protein uS3 (218 aa).

The region spanning 2–71 (SAPQRRLPVY…IGRKGAIVKE (70 aa)) is the KH type-2 domain.

The protein belongs to the universal ribosomal protein uS3 family. As to quaternary structure, part of the 30S ribosomal subunit.

In terms of biological role, binds the lower part of the 30S subunit head. This is Small ribosomal subunit protein uS3 from Pyrobaculum aerophilum (strain ATCC 51768 / DSM 7523 / JCM 9630 / CIP 104966 / NBRC 100827 / IM2).